Reading from the N-terminus, the 273-residue chain is Translation initiation factor IF-3, mitochondrial (273 aa).

The N-terminal 32 residues, 1–32 (MAALFLKKLTLQTVKTENYCIRRCLGKYILQG), are a transit peptide targeting the mitochondrion. The propeptide at 33–92 (PAPTQQPPRPSCLIHAKAFSTEDTQDEMTKKKKNETAFSSVGRKINERIIHVLDEQGNDL) is removed in mature form. The tract at residues 242-273 (EEAAWKAAPDTPRRDALNGGDGKDGASGVLPQ) is disordered. Residues 252 to 265 (TPRRDALNGGDGKD) show a composition bias toward basic and acidic residues.

The protein belongs to the IF-3 family.

It is found in the mitochondrion. Its function is as follows. IF-3 binds to the 28S ribosomal subunit and shifts the equilibrium between 55S ribosomes and their 39S and 28S subunits in favor of the free subunits, thus enhancing the availability of 28S subunits on which protein synthesis initiation begins. The chain is Translation initiation factor IF-3, mitochondrial (MTIF3) from Bos taurus (Bovine).